Consider the following 158-residue polypeptide: Naphthalene 1,2-dioxygenase system, small oxygenase component (158 aa).

Belongs to the bacterial ring-hydroxylating dioxygenase beta subunit family. The naphthalene dioxygenase (NDO) multicomponent enzyme system is composed of an electron transfer component and a dioxygenase component (iron sulfur protein (ISP)). The electron transfer component is composed of a ferredoxin reductase (NdoR) and a ferredoxin (NdoA), and the dioxygenase component is formed of a heterohexamer (trimer of heterodimers) of three large alpha subunits (NdoB) and three small beta subunits (NdoC).

It participates in aromatic compound metabolism; naphthalene degradation. Component of the naphthalene dioxygenase (NDO) multicomponent enzyme system which catalyzes the incorporation of both atoms of molecular oxygen into naphthalene to form cis-(1R,2S)-dihydroxy-1,2-dihydronaphthalene. The beta subunit seems to have a structural role in the holoenzyme. This chain is Naphthalene 1,2-dioxygenase system, small oxygenase component, found in Pseudomonas fluorescens.